Consider the following 265-residue polypeptide: uncharacterized protein (265 aa).

E47 contributes to the thiamine diphosphate binding site. A thiamine pyrophosphate binding region spans residues 204-247 (QHQMWLVQHILRVARHCGFTVTTMEMTLIETQVRLKITVKSDRT).

The protein belongs to the TPP enzyme family. It depends on Mg(2+) as a cofactor. Thiamine diphosphate serves as cofactor.

In terms of biological role, truncated acetolactase synthase; no longer catalytically active. This is an uncharacterized protein from Haemophilus influenzae (strain ATCC 51907 / DSM 11121 / KW20 / Rd).